Consider the following 329-residue polypeptide: G-protein coupled bile acid receptor 1 (329 aa).

Residues 1–15 lie on the Extracellular side of the membrane; it reads MMTPNSTELSAIPMG. N5 carries N-linked (GlcNAc...) asparagine glycosylation. Residues 16-36 traverse the membrane as a helical segment; the sequence is VLGLSLALASLIVIANLLLAL. At 37–49 the chain is on the cytoplasmic side; it reads GIALDRHLRSPPA. A helical membrane pass occupies residues 50 to 70; the sequence is GCFFLSLLLAGLLTGLALPML. Residues 71 to 84 lie on the Extracellular side of the membrane; the sequence is PGLWSRNHQGYWSC. Residues C84 and C154 are joined by a disulfide bond. A helical membrane pass occupies residues 85–105; the sequence is LLLHLTPNFCFLSLLANLLLV. Over 106–124 the chain is Cytoplasmic; it reads HGERYMAVLQPLRPHGSVR. A helical transmembrane segment spans residues 125-145; it reads LALFLTWVSSLFFASLPALGW. Over 146–164 the chain is Extracellular; the sequence is NHWSPDANCSSQAVFPAPY. N153 is a glycosylation site (N-linked (GlcNAc...) asparagine). A helical transmembrane segment spans residues 165–185; sequence LYLEVYGLLLPAVGATALLSV. Topologically, residues 186–229 are cytoplasmic; the sequence is RVLATAHRQLCEIRRLERAVCRDVPSTLARALTWRQARAQAGAT. A helical membrane pass occupies residues 230-250; the sequence is LLFLLCWGPYVATLLLSVLAY. The Extracellular segment spans residues 251-260; sequence ERRPPLGPGT. Residues 261–281 traverse the membrane as a helical segment; the sequence is LLSLISLGSTSAAAVPVAMGL. At 282 to 329 the chain is on the cytoplasmic side; it reads GDQRYTAPWRTAAQRCLRVLRGRAKRDNPGPSTAYHTSSQCSIDLDLN.

This sequence belongs to the G-protein coupled receptor 1 family.

The protein resides in the cell membrane. Functionally, receptor for bile acid. Bile acid-binding induces its internalization, activation of extracellular signal-regulated kinase and intracellular cAMP production. May be involved in the suppression of macrophage functions by bile acids. Involved in bile acid promoted GLP1R secretion. This is G-protein coupled bile acid receptor 1 (Gpbar1) from Mus musculus (Mouse).